The primary structure comprises 579 residues: MFS-type transporter olcL (579 aa).

Over residues 1–24 the composition is skewed to polar residues; the sequence is MANIGGSNAVSSAQGSQISDSPTT. The segment at 1–75 is disordered; the sequence is MANIGGSNAV…GFGEDGCQSD (75 aa). Over residues 25 to 35 the composition is skewed to basic and acidic residues; the sequence is VDDRLDEHKET. Over residues 36–54 the composition is skewed to polar residues; sequence STQSIDHSENITQSPTSLQ. Asn-45 is a glycosylation site (N-linked (GlcNAc...) asparagine). 9 helical membrane passes run 85-105, 121-141, 159-179, 183-203, 214-234, 241-261, 282-302, 310-330, and 355-375; these read LAAI…DNTI, GDVG…TLVF, AVFE…GLII, IAGL…SQSV, LVGG…GAFT, WCFY…LLFF, LIGL…LQWG, SGRI…FIMV, and LFNF…PVWF. A glycan (N-linked (GlcNAc...) asparagine) is linked at Asn-380. The next 5 helical transmembrane spans lie at 388–408, 411–431, 439–459, 479–501, and 553–573; these read LMNL…GYGV, IGYY…GAGL, FGPS…GLGL, IAIV…QNVF, and FYVG…IQWI.

This sequence belongs to the major facilitator superfamily. TCR/Tet family.

It localises to the peroxisome membrane. Functionally, MFS-type transporter; part of the gene cluster that mediates the biosynthesis of 15-deoxyoxalicine B. The first step of the pathway is the synthesis of nicotinyl-CoA from nicotinic acid by the nicotinic acid-CoA ligase olcI. Nicotinyl-CoA is then a substrate of polyketide synthase olcA to produce 4-hydroxy-6-(3-pyridinyl)-2H-pyran-2-one (HPPO) which is further prenylated by the polyprenyl transferase olcH to yield geranylgeranyl-HPPO. Geranylgeranyl pyrophosphate is provided by the cluster-specific geranylgeranyl pyrophosphate synthase olcC. The FAD-dependent monooxygenase olcE catalyzes the epoxidation of geranylgeranyl-HPPO and the terpene cyclase olcD catalyzes the cyclization of the terpenoid component, resulting in the formation of the tricyclic terpene moiety seen in predecaturin E. The cytochrome P450 monooxygenase then catalyzes the allylic oxidation of predecaturin E, which is followed by spirocylization with concomitant loss of one molecule of water to form decaturin E. Decaturin E is the substrate of the cytochrome P450 monooxygenase olcJ which hydroxylates it at the C-29 position to form decaturin F. The short-chain dehydrogenase/reductase olcF may catalyze the oxidation of decaturin F to generate the 29-hydroxyl-27-one intermediate, and subsequent hemiacetal formation probably leads to the formation of decaturin C. The dioxygenase olcK may be a peroxisomal enzyme that catalyzes the hydroxylation of decaturin C into decaturin A once decaturin C is shuttled into the peroxisome by the MFS transporter olcL. Finally the cytochrome P450 monooxygenase olcB catalyzes the oxidative rearrangement to yield 15-deoxyoxalicine B. In the absence of olcJ, decaturin E may be shunted to a pathway in which it is oxidized to a ketone, possibly by olcF, to form decaturin D, which undergoes further allylic oxidation to yield decaturin G. Moreover, in the absence of oclK or oclL, oclB can convert decaturin C into 15-deoxyoxalicine A. The chain is MFS-type transporter olcL from Penicillium canescens.